The sequence spans 398 residues: Probable aminomethyltransferase (398 aa).

This sequence belongs to the GcvT family. As to quaternary structure, the glycine cleavage system is composed of four proteins: P, T, L and H.

It carries out the reaction N(6)-[(R)-S(8)-aminomethyldihydrolipoyl]-L-lysyl-[protein] + (6S)-5,6,7,8-tetrahydrofolate = N(6)-[(R)-dihydrolipoyl]-L-lysyl-[protein] + (6R)-5,10-methylene-5,6,7,8-tetrahydrofolate + NH4(+). In terms of biological role, the glycine cleavage system catalyzes the degradation of glycine. This Thermococcus kodakarensis (strain ATCC BAA-918 / JCM 12380 / KOD1) (Pyrococcus kodakaraensis (strain KOD1)) protein is Probable aminomethyltransferase.